The sequence spans 153 residues: Large ribosomal subunit protein uL30 (153 aa).

It belongs to the universal ribosomal protein uL30 family. As to quaternary structure, part of the 50S ribosomal subunit.

The protein is Large ribosomal subunit protein uL30 of Methanosarcina acetivorans (strain ATCC 35395 / DSM 2834 / JCM 12185 / C2A).